The sequence spans 240 residues: Triosephosphate isomerase (240 aa).

9–11 serves as a coordination point for substrate; sequence NWK. Residue His-94 is the Electrophile of the active site. Catalysis depends on Glu-163, which acts as the Proton acceptor. Substrate contacts are provided by residues Gly-169, Ser-202, and 223-224; that span reads GG.

Belongs to the triosephosphate isomerase family. As to quaternary structure, homodimer.

Its subcellular location is the cytoplasm. It catalyses the reaction D-glyceraldehyde 3-phosphate = dihydroxyacetone phosphate. It participates in carbohydrate biosynthesis; gluconeogenesis. It functions in the pathway carbohydrate degradation; glycolysis; D-glyceraldehyde 3-phosphate from glycerone phosphate: step 1/1. Its function is as follows. Involved in the gluconeogenesis. Catalyzes stereospecifically the conversion of dihydroxyacetone phosphate (DHAP) to D-glyceraldehyde-3-phosphate (G3P). This Gloeobacter violaceus (strain ATCC 29082 / PCC 7421) protein is Triosephosphate isomerase.